The following is a 405-amino-acid chain: Probable glucan 1,3-beta-glucosidase A (405 aa).

Positions 1–26 are cleaved as a signal peptide; that stretch reads MFPRISQAAILAHSLLAVCTSAATLA. Glu198 (proton donor) is an active-site residue. Disulfide bonds link Cys278–Cys403 and Cys304–Cys330. Glu296 acts as the Nucleophile in catalysis.

This sequence belongs to the glycosyl hydrolase 5 (cellulase A) family. As to quaternary structure, monomer. It depends on Mn(2+) as a cofactor.

Its subcellular location is the secreted. It catalyses the reaction Successive hydrolysis of beta-D-glucose units from the non-reducing ends of (1-&gt;3)-beta-D-glucans, releasing alpha-glucose.. Its function is as follows. Beta-glucanases participate in the metabolism of beta-glucan, the main structural component of the cell wall. It could also function biosynthetically as a transglycosylase. This chain is Probable glucan 1,3-beta-glucosidase A (exgA), found in Emericella nidulans (strain FGSC A4 / ATCC 38163 / CBS 112.46 / NRRL 194 / M139) (Aspergillus nidulans).